Here is a 348-residue protein sequence, read N- to C-terminus: Phosphate acyltransferase (348 aa).

The protein belongs to the PlsX family. As to quaternary structure, homodimer. Probably interacts with PlsY.

Its subcellular location is the cytoplasm. The enzyme catalyses a fatty acyl-[ACP] + phosphate = an acyl phosphate + holo-[ACP]. Its pathway is lipid metabolism; phospholipid metabolism. Its function is as follows. Catalyzes the reversible formation of acyl-phosphate (acyl-PO(4)) from acyl-[acyl-carrier-protein] (acyl-ACP). This enzyme utilizes acyl-ACP as fatty acyl donor, but not acyl-CoA. The protein is Phosphate acyltransferase of Nitrosomonas europaea (strain ATCC 19718 / CIP 103999 / KCTC 2705 / NBRC 14298).